The primary structure comprises 369 residues: 3 beta-hydroxysteroid dehydrogenase type 7 (369 aa).

Tyr159 serves as the catalytic Proton acceptor. Lys163 provides a ligand contact to NAD(+). Helical transmembrane passes span 289-309 and 311-331; these read LLPY…QWLL and PLVL…NTTF.

The protein belongs to the 3-beta-HSD family.

The protein resides in the endoplasmic reticulum membrane. It carries out the reaction 7alpha-hydroxycholesterol + NAD(+) = 7alpha-hydroxycholest-4-en-3-one + NADH + H(+). It catalyses the reaction 7alpha,25-dihydroxycholesterol + NAD(+) = 7alpha,25-dihydroxy-4-cholesten-3-one + NADH + H(+). The enzyme catalyses (25R)-cholest-5-en-3beta,7alpha,26-triol + NAD(+) = (25R)-7alpha,26-dihydroxycholest-4-en-3-one + NADH + H(+). The catalysed reaction is (24S)-7alpha-dihydroxycholesterol + NAD(+) = (24S)-7alpha,24-dihydroxycholest-4-en-3-one + NADH + H(+). It participates in lipid metabolism; steroid biosynthesis. Functionally, the 3-beta-HSD enzymatic system plays a crucial role in the biosynthesis of all classes of hormonal steroids. HSD VII is active against four 7-alpha-hydroxylated sterols. Does not metabolize several different C(19/21) steroids as substrates. Involved in bile acid synthesis. Plays a key role in cell positioning and movement in lymphoid tissues by mediating degradation of 7-alpha,25-dihydroxycholesterol (7-alpha,25-OHC): 7-alpha,25-OHC acts as a ligand for the G protein-coupled receptor GPR183/EBI2, a chemotactic receptor for a number of lymphoid cells. In Homo sapiens (Human), this protein is 3 beta-hydroxysteroid dehydrogenase type 7.